The following is a 291-amino-acid chain: UPF0276 protein VV1_0952 (291 aa).

This sequence belongs to the UPF0276 family.

The sequence is that of UPF0276 protein VV1_0952 from Vibrio vulnificus (strain CMCP6).